The chain runs to 448 residues: MPPKDSDSSTASGPRSKTTRPRAIRRLVIWYRRNAAVTSLVGSATNSASAAGNVAGTVVSSAGSVVSNAGSMAGSMLQPLVFDPLRRLQSSENNPEAEDIKNSDRLWVAVDGMGGDEAPGPILDGCLKAIQRLPLRIKFVGETEKVLGAVQAMGLTELFNQATAAGHLELVASGPSVGMDEEATVVRRKRDASINLTMDLVKKGEALAMYSAGNSGAMMASAIFRLGRLAGIDRPAIGALFPTKDPTQPVLVLDVGANMDCKPIYLHQFALLGNIYSRDVLQVARPRIGLLNIGEEECKGNDLAIRTHELLSEEHRLQFAGNCEGRDVLSGAFDVVVCDGFTGNVLLKFLESVGSVLLDVLRAELPRGRRGKVGSAFLRSNLKRIKKRLDHAEHGGALLLGVNGICVIGHGSSKALSVVSALRLAHSAASHGVMDDLAELQKAPVESA.

A unknown region spans residues 1–105 (MPPKDSDSST…EAEDIKNSDR (105 aa)). The tract at residues 106–448 (LWVAVDGMGG…ELQKAPVESA (343 aa)) is phosphate acyltransferase.

The protein belongs to the PlsX family. As to quaternary structure, homodimer. Probably interacts with PlsY.

It localises to the cytoplasm. The enzyme catalyses a fatty acyl-[ACP] + phosphate = an acyl phosphate + holo-[ACP]. It functions in the pathway lipid metabolism; phospholipid metabolism. Catalyzes the reversible formation of acyl-phosphate (acyl-PO(4)) from acyl-[acyl-carrier-protein] (acyl-ACP). This enzyme utilizes acyl-ACP as fatty acyl donor, but not acyl-CoA. The polypeptide is Phosphate acyltransferase (plsX) (Prochlorococcus marinus (strain MIT 9313)).